A 480-amino-acid polypeptide reads, in one-letter code: NADH-quinone oxidoreductase subunit N (480 aa).

A run of 13 helical transmembrane segments spans residues 5 to 25, 40 to 60, 69 to 89, 110 to 130, 162 to 182, 204 to 224, 237 to 257, 266 to 286, 296 to 316, 324 to 344, 368 to 388, 404 to 424, and 450 to 470; these read NFLCIEQELKLIALLVILFLY, IAIVGFAIVIISEFPPYFTMY, ISSQLTFFMKSILNVATFLVF, VIMLISLLGMYFMISAENFVM, YILTSALSSGVMLFGLSFLYG, LGFVFFFGGLGFKLSLVPFHL, VTAYLSVVSKGAATFALIFVL, LIWNNILCWLLLATIVLGNLF, FFAFSSISQAGYILLGIIAGT, IFYTLVYLFSNLAAFGVIASV, AFVMMLAVFSLGGIPPFAGFF, ILVFIALLNTVMSLYYYLLIV, and MVICTIGIFVIGFLSAIYEYI.

This sequence belongs to the complex I subunit 2 family. In terms of assembly, NDH-1 is composed of 14 different subunits. Subunits NuoA, H, J, K, L, M, N constitute the membrane sector of the complex.

It localises to the cell inner membrane. It catalyses the reaction a quinone + NADH + 5 H(+)(in) = a quinol + NAD(+) + 4 H(+)(out). Functionally, NDH-1 shuttles electrons from NADH, via FMN and iron-sulfur (Fe-S) centers, to quinones in the respiratory chain. The immediate electron acceptor for the enzyme in this species is believed to be a menaquinone. Couples the redox reaction to proton translocation (for every two electrons transferred, four hydrogen ions are translocated across the cytoplasmic membrane), and thus conserves the redox energy in a proton gradient. This Azobacteroides pseudotrichonymphae genomovar. CFP2 protein is NADH-quinone oxidoreductase subunit N.